We begin with the raw amino-acid sequence, 305 residues long: UDP-3-O-acyl-N-acetylglucosamine deacetylase (305 aa).

The Zn(2+) site is built by H78, H235, and D239. The Proton donor role is filled by H262.

It belongs to the LpxC family. Requires Zn(2+) as cofactor.

It carries out the reaction a UDP-3-O-[(3R)-3-hydroxyacyl]-N-acetyl-alpha-D-glucosamine + H2O = a UDP-3-O-[(3R)-3-hydroxyacyl]-alpha-D-glucosamine + acetate. It participates in glycolipid biosynthesis; lipid IV(A) biosynthesis; lipid IV(A) from (3R)-3-hydroxytetradecanoyl-[acyl-carrier-protein] and UDP-N-acetyl-alpha-D-glucosamine: step 2/6. Functionally, catalyzes the hydrolysis of UDP-3-O-myristoyl-N-acetylglucosamine to form UDP-3-O-myristoylglucosamine and acetate, the committed step in lipid A biosynthesis. This Citrifermentans bemidjiense (strain ATCC BAA-1014 / DSM 16622 / JCM 12645 / Bem) (Geobacter bemidjiensis) protein is UDP-3-O-acyl-N-acetylglucosamine deacetylase.